The primary structure comprises 313 residues: Protein-glutamine deamidase Cif (313 aa).

Catalysis depends on residues Cys128, His186, and Gln205.

The protein belongs to the Cif family.

The protein resides in the secreted. Its subcellular location is the host nucleus. The catalysed reaction is L-glutaminyl-[protein] + H2O = L-glutamyl-[protein] + NH4(+). Protein-glutamine deamidase effector that inhibits the host cell cycle and other key cellular processes such as the actin network and programmed-cell death. Acts by mediating the side chain deamidation of 'Gln-40' of host NEDD8, converting it to glutamate, thereby abolishing the activity of cullin-RING-based E3 ubiquitin-protein ligase complexes (CRL complexes). Inactivation of CRL complexes prevents ubiquitination and subsequent degradation of the cyclin-dependent kinase inhibitors CDKN1A/p21 and CDKN1B/p27, leading to G1 and G2 cell cycle arrests in host cells. Deamidation of 'Gln-40' of host NEDD8 also triggers macrophage-specific programmed cell death. Also able to catalyze deamidation of 'Gln-40' of host ubiquitin in vitro; however, NEDD8 constitutes the preferred substrate in vivo. The sequence is that of Protein-glutamine deamidase Cif from Photorhabdus laumondii subsp. laumondii (strain DSM 15139 / CIP 105565 / TT01) (Photorhabdus luminescens subsp. laumondii).